We begin with the raw amino-acid sequence, 150 residues long: UPF0178 protein Bcep1808_1605 (150 aa).

The protein belongs to the UPF0178 family.

The chain is UPF0178 protein Bcep1808_1605 from Burkholderia vietnamiensis (strain G4 / LMG 22486) (Burkholderia cepacia (strain R1808)).